A 118-amino-acid polypeptide reads, in one-letter code: MAAAAAAGSGTPREEEAPGGEAAASQAQAPTSAPGGVRLSRLPLARVKALVKADPDVTLAGQEAIFILARAAELFVETIAKDAYCCAQQGKRKTLQRRDLDNAIEAVDEFAFLEGTLD.

Composition is skewed to low complexity over residues 1 to 11 (MAAAAAAGSGT) and 19 to 35 (GGEA…SAPG). Positions 1–37 (MAAAAAAGSGTPREEEAPGGEAAASQAQAPTSAPGGV) are disordered. Ala-2 bears the N-acetylalanine mark. Thr-11 carries the phosphothreonine modification. Ser-25 carries the phosphoserine modification.

In terms of assembly, component of the DNA polymerase epsilon complex consisting of four subunits: the catalytic subunit POLE and the accessory subunits POLE2, POLE3 and POLE4. Interaction with POLE3 is a prerequisite for further binding with POLE and POLE2.

It is found in the nucleus. Functionally, accessory component of the DNA polymerase epsilon complex. Participates in DNA repair and in chromosomal DNA replication. In Mus musculus (Mouse), this protein is DNA polymerase epsilon subunit 4 (Pole4).